The primary structure comprises 197 residues: Putative peptidyl-prolyl cis-trans isomerase (197 aa).

Residues 14 to 195 (NEIKVVMHTN…YDVVIESIDV (182 aa)) form the PPIase cyclophilin-type domain.

This sequence belongs to the cyclophilin-type PPIase family.

The catalysed reaction is [protein]-peptidylproline (omega=180) = [protein]-peptidylproline (omega=0). Its function is as follows. PPIases accelerate the folding of proteins. It catalyzes the cis-trans isomerization of proline imidic peptide bonds in oligopeptides. In Staphylococcus epidermidis (strain ATCC 35984 / DSM 28319 / BCRC 17069 / CCUG 31568 / BM 3577 / RP62A), this protein is Putative peptidyl-prolyl cis-trans isomerase.